We begin with the raw amino-acid sequence, 137 residues long: Large ribosomal subunit protein uL16 (137 aa).

Belongs to the universal ribosomal protein uL16 family. Part of the 50S ribosomal subunit.

Functionally, binds 23S rRNA and is also seen to make contacts with the A and possibly P site tRNAs. This is Large ribosomal subunit protein uL16 from Hydrogenovibrio crunogenus (strain DSM 25203 / XCL-2) (Thiomicrospira crunogena).